The following is a 244-amino-acid chain: Serine acetyltransferase (244 aa).

This sequence belongs to the transferase hexapeptide repeat family.

It is found in the cytoplasm. The catalysed reaction is L-serine + acetyl-CoA = O-acetyl-L-serine + CoA. The protein operates within amino-acid biosynthesis; L-cysteine biosynthesis; L-cysteine from L-serine: step 1/2. The chain is Serine acetyltransferase (cysE) from Synechococcus elongatus (strain ATCC 33912 / PCC 7942 / FACHB-805) (Anacystis nidulans R2).